A 251-amino-acid chain; its full sequence is Segregation and condensation protein A (251 aa).

This sequence belongs to the ScpA family. In terms of assembly, component of a cohesin-like complex composed of ScpA, ScpB and the Smc homodimer, in which ScpA and ScpB bind to the head domain of Smc. The presence of the three proteins is required for the association of the complex with DNA.

The protein resides in the cytoplasm. Functionally, participates in chromosomal partition during cell division. May act via the formation of a condensin-like complex containing Smc and ScpB that pull DNA away from mid-cell into both cell halves. The sequence is that of Segregation and condensation protein A from Clostridium botulinum (strain Eklund 17B / Type B).